The following is a 290-amino-acid chain: Ribosomal RNA small subunit methyltransferase A (290 aa).

Residues Asn27, Leu29, Gly54, Glu75, Asp100, and Asn125 each coordinate S-adenosyl-L-methionine.

The protein belongs to the class I-like SAM-binding methyltransferase superfamily. rRNA adenine N(6)-methyltransferase family. RsmA subfamily.

It is found in the cytoplasm. It carries out the reaction adenosine(1518)/adenosine(1519) in 16S rRNA + 4 S-adenosyl-L-methionine = N(6)-dimethyladenosine(1518)/N(6)-dimethyladenosine(1519) in 16S rRNA + 4 S-adenosyl-L-homocysteine + 4 H(+). Specifically dimethylates two adjacent adenosines (A1518 and A1519) in the loop of a conserved hairpin near the 3'-end of 16S rRNA in the 30S particle. May play a critical role in biogenesis of 30S subunits. This chain is Ribosomal RNA small subunit methyltransferase A, found in Streptococcus pyogenes serotype M3 (strain ATCC BAA-595 / MGAS315).